The sequence spans 182 residues: MSHRLLFVGPPGAGKGTQAERLAANHGLLHLSTGDLLRAEVKAGSELGKEAEAVMNRGELVSDALVLAIVRSRLQSHSGGWLLDGFPRNLAQAEALDALLSELNQPLQSVLLMELDDDELVQRLLARGRADDNEEVIRHRLSVYREQTAPLINHYEQRGQLKRVVSTGTIEAVAEQITAALA.

12 to 17 (GAGKGT) lines the ATP pocket. Residues 32–61 (STGDLLRAEVKAGSELGKEAEAVMNRGELV) form an NMP region. Residues T33, R38, 59-61 (ELV), 85-88 (GFPR), and Q92 each bind AMP. The interval 126 to 132 (ARGRADD) is LID. R127 is an ATP binding site. Positions 129 and 140 each coordinate AMP. G168 contributes to the ATP binding site.

The protein belongs to the adenylate kinase family. As to quaternary structure, monomer.

The protein resides in the cytoplasm. It carries out the reaction AMP + ATP = 2 ADP. It functions in the pathway purine metabolism; AMP biosynthesis via salvage pathway; AMP from ADP: step 1/1. Its function is as follows. Catalyzes the reversible transfer of the terminal phosphate group between ATP and AMP. Plays an important role in cellular energy homeostasis and in adenine nucleotide metabolism. This chain is Adenylate kinase, found in Synechococcus sp. (strain RCC307).